The following is a 134-amino-acid chain: Fatty acid-binding protein 5 (134 aa).

The short motif at 23 to 33 is the Nuclear localization signal element; sequence KELGVGMAMRK. Hexadecanoate is bound by residues Arg-109 and 129–131; that span reads RVY. N-eicosanoyl ethanolamine contacts are provided by Arg-109 and Tyr-131. Residue 129-131 participates in (9Z,12Z)-octadecadienoate binding; it reads RVY.

The protein belongs to the calycin superfamily. Fatty-acid binding protein (FABP) family. Monomer.

Its subcellular location is the cytoplasm. The protein resides in the nucleus. It localises to the synapse. It is found in the postsynaptic density. The protein localises to the secreted. The enzyme catalyses hexadecanoate(out) = hexadecanoate(in). It carries out the reaction (9Z,12Z)-octadecadienoate(out) = (9Z,12Z)-octadecadienoate(in). It catalyses the reaction (9Z)-octadecenoate(out) = (9Z)-octadecenoate(in). Intracellular carrier for long-chain fatty acids and related active lipids, such as endocannabinoids, that regulate the metabolism and actions of the ligands they bind. In addition to the cytosolic transport, selectively delivers specific fatty acids from the cytosol to the nucleus, wherein they activate nuclear receptors. Delivers retinoic acid to the nuclear receptor peroxisome proliferator-activated receptor delta; which promotes proliferation and survival. May also serve as a synaptic carrier of endocannabinoid at central synapses and thus controls retrograde endocannabinoid signaling. Modulates inflammation by regulating PTGES induction via NF-kappa-B activation, and prostaglandin E2 (PGE2) biosynthesis during inflammation. Has the highest binding affinity for docosahexaenoic acid (DHA) and decreasing relative affinity for eicosapentaenoic acid (EPA), alpha-linolenic acid (ALA), oleic acid, palmitic acid, linoleic acid and stearic acid, respectively. This is Fatty acid-binding protein 5 from Pygoscelis papua (Gentoo penguin).